The sequence spans 184 residues: Endoribonuclease YbeY (184 aa).

Residues histidine 151, histidine 155, and histidine 161 each contribute to the Zn(2+) site.

Belongs to the endoribonuclease YbeY family. It depends on Zn(2+) as a cofactor.

It is found in the cytoplasm. Single strand-specific metallo-endoribonuclease involved in late-stage 70S ribosome quality control and in maturation of the 3' terminus of the 16S rRNA. The protein is Endoribonuclease YbeY of Prochlorococcus marinus (strain NATL2A).